Here is a 154-residue protein sequence, read N- to C-terminus: UPF0756 membrane protein RBAM_026200 (154 aa).

4 helical membrane-spanning segments follow: residues 14 to 34 (AIAL…LIVI), 54 to 74 (WGVT…DIGF), 87 to 107 (WIAL…LTLL), and 117 to 137 (LVIG…GPLI).

This sequence belongs to the UPF0756 family.

Its subcellular location is the cell membrane. In Bacillus velezensis (strain DSM 23117 / BGSC 10A6 / LMG 26770 / FZB42) (Bacillus amyloliquefaciens subsp. plantarum), this protein is UPF0756 membrane protein RBAM_026200.